Here is a 327-residue protein sequence, read N- to C-terminus: Polyprenyl transferase esdpC (327 aa).

8 helical membrane passes run 35–54 (YNPL…AGAS), 73–93 (LLVF…NDWI), 118–138 (EALI…AYTL), 140–160 (GHNV…YPFG), 171–191 (YPQY…WLAI), 202–222 (IMES…LNTA), 239–259 (VYFL…ALVL), and 307–327 (ENFA…LLKS).

It belongs to the UbiA prenyltransferase family. The cofactor is Mg(2+).

It localises to the membrane. It participates in secondary metabolite biosynthesis; terpenoid biosynthesis. Functionally, olyprenyl transferase; part of the cluster that mediates the biosynthesis of shearones, diterpenoid pyrones (DPs) which are structurally diverse meroterpenoids consisting of a diterpene linked by a pyrone, and which may exhibit a range of bioactivities. Within the pathway, esdpC takes part to the biosynthesis of the molecular scaffold by catalyzing the C-3 geranylgeranylation reaction of the alpha-pyrone produced by esdpA. The molecular scaffold is commonly biosynthesized by a series of enzymes including the non-reducing polyketide synthase (NR-PKS) esdpA that generates an alpha-pyrone; the prenyltransferase esdpC that attaches a geranylgeranyl pyrophosphate (GGPP) produced by the GGPP synthase (GGPPS) esdpD onto the pyrone unit; the FAD-dependent monooxygenase esdpE that converts an olefin on the diterpene unit into an epoxide; and the terpene cyclase esdpB that catalyzes the cyclization reactions to give the molecular backbone shearone A. In the modification steps, esdpF oxidizes the hydroxy group to a ketone at C-3 and esdpG then attaches hydroxy groups at both C-11 and C-12. After that, esdpI hydroxylates at C-20 and esdpH hydroxylates at C-6'. The ether bridge is generated by nucleophilic attack of the hydroxy group at C-20 to the carbonyl carbon at C-3. EsdpH can also functions prior to esdpI. The different combinations of these modification enzymes lead to the production of diverse shearone derivatives, shearone I being the end product of the pathway. The alpha-ketoglutarate-dependent dioxygenase esdpJ seems not to be involved in this pathway. This chain is Polyprenyl transferase esdpC, found in Penicillium shearii (Eupenicillium shearii).